A 219-amino-acid polypeptide reads, in one-letter code: Kappa-scoloptoxin(11)-Ss1a (219 aa).

The first 16 residues, 1 to 16 (MFYSHLLFFTFTFACS), serve as a signal peptide directing secretion. Residues 17-25 (SSLNRKTKR) constitute a propeptide that is removed on maturation.

Post-translationally, contains 8 disulfide bonds. Expressed by the venom gland.

The protein localises to the secreted. Functionally, voltage-gated potassium channel inhibitor. In Scolopendra dehaani (Thai centipede), this protein is Kappa-scoloptoxin(11)-Ss1a.